The chain runs to 549 residues: MKNINPTQTSAWQALQKHYDEMKDVTIAELFANDSDRFAKFSATFDDLMLVDFSKNRITEETLAKLQDLAKETDLAGAIKSMFSGEKINRTEDRAVLHVALRNRSNTPIIVDGKDVMPEVNAVLEKMKTFSQAIISGQWKGYTGKAITDVVNIGIGGSDLGPFMVTEALRPYKNHLNMHFVSNVDGTHIAEVLKKVNPETTLFLVASKTFTTQETMTNAHSARDWFLKTAGDEKHVAKHFAALSTNAKAVGEFGIDTANMFEFWDWVGGRYSLWSAIGLSIILSVGFDNFVELLSGAHAMDKHFSTTPAEKNLPILLALIGIWYNNFFGAETEAILPYDQYMHRFAAYFQQGNMESNGKYVDRNGNAVDYQTGPIIWGEPGTNGQHAFYQLIHQGTKMVPCDFIAPAITHNPLSDHHQKLLSNFFAQTEALAFGKSREVVEQEYRDQGKDPAQLEHVVPFKVFEGNRPTNSILLREITPFSLGALIALYEHKIFTQGAILNIFTFDQWGVELGKQLANRILPELGDDKAISSHDSSTNGLINRYKAWRA.

Residue Glu-355 is the Proton donor of the active site. Catalysis depends on residues His-386 and Lys-514.

The protein belongs to the GPI family.

The protein resides in the cytoplasm. The enzyme catalyses alpha-D-glucose 6-phosphate = beta-D-fructose 6-phosphate. The protein operates within carbohydrate biosynthesis; gluconeogenesis. Its pathway is carbohydrate degradation; glycolysis; D-glyceraldehyde 3-phosphate and glycerone phosphate from D-glucose: step 2/4. Functionally, catalyzes the reversible isomerization of glucose-6-phosphate to fructose-6-phosphate. The sequence is that of Glucose-6-phosphate isomerase from Salmonella agona (strain SL483).